The chain runs to 305 residues: Aspartate carbamoyltransferase catalytic subunit (305 aa).

Carbamoyl phosphate-binding residues include arginine 51 and threonine 52. An L-aspartate-binding site is contributed by lysine 79. Positions 101, 129, and 132 each coordinate carbamoyl phosphate. L-aspartate-binding residues include arginine 165 and arginine 220. Glycine 258 and proline 259 together coordinate carbamoyl phosphate.

This sequence belongs to the aspartate/ornithine carbamoyltransferase superfamily. ATCase family. Heterododecamer (2C3:3R2) of six catalytic PyrB chains organized as two trimers (C3), and six regulatory PyrI chains organized as three dimers (R2).

It catalyses the reaction carbamoyl phosphate + L-aspartate = N-carbamoyl-L-aspartate + phosphate + H(+). The protein operates within pyrimidine metabolism; UMP biosynthesis via de novo pathway; (S)-dihydroorotate from bicarbonate: step 2/3. Its function is as follows. Catalyzes the condensation of carbamoyl phosphate and aspartate to form carbamoyl aspartate and inorganic phosphate, the committed step in the de novo pyrimidine nucleotide biosynthesis pathway. This Rubrobacter xylanophilus (strain DSM 9941 / JCM 11954 / NBRC 16129 / PRD-1) protein is Aspartate carbamoyltransferase catalytic subunit.